A 631-amino-acid chain; its full sequence is DNA mismatch repair protein MutL (631 aa).

This sequence belongs to the DNA mismatch repair MutL/HexB family.

In terms of biological role, this protein is involved in the repair of mismatches in DNA. It is required for dam-dependent methyl-directed DNA mismatch repair. May act as a 'molecular matchmaker', a protein that promotes the formation of a stable complex between two or more DNA-binding proteins in an ATP-dependent manner without itself being part of a final effector complex. The chain is DNA mismatch repair protein MutL from Lactobacillus acidophilus (strain ATCC 700396 / NCK56 / N2 / NCFM).